Consider the following 287-residue polypeptide: Elongation factor Ts (287 aa).

Positions 80–83 (TDFL) are involved in Mg(2+) ion dislocation from EF-Tu.

The protein belongs to the EF-Ts family.

The protein localises to the cytoplasm. Associates with the EF-Tu.GDP complex and induces the exchange of GDP to GTP. It remains bound to the aminoacyl-tRNA.EF-Tu.GTP complex up to the GTP hydrolysis stage on the ribosome. The polypeptide is Elongation factor Ts (Pseudomonas putida (strain W619)).